We begin with the raw amino-acid sequence, 398 residues long: G2/mitotic-specific cyclin-B2 (398 aa).

Threonine 8 carries the post-translational modification Phosphothreonine. A phosphoserine mark is found at serine 11, serine 77, and serine 92. Phosphothreonine is present on threonine 94. Phosphoserine is present on residues serine 99, serine 392, and serine 398.

This sequence belongs to the cyclin family. Cyclin AB subfamily. Interacts with the CDK1 protein kinase to form a serine/threonine kinase holoenzyme complex also known as maturation promoting factor (MPF). The cyclin subunit imparts substrate specificity to the complex.

Essential for the control of the cell cycle at the G2/M (mitosis) transition. This chain is G2/mitotic-specific cyclin-B2 (CCNB2), found in Homo sapiens (Human).